A 622-amino-acid chain; its full sequence is 1-deoxy-D-xylulose-5-phosphate synthase (622 aa).

Thiamine diphosphate-binding positions include H80 and 121 to 123 (GHS). Position 152 (D152) interacts with Mg(2+). Thiamine diphosphate-binding positions include 153-154 (GA), N181, Y288, and E370. N181 lines the Mg(2+) pocket.

Belongs to the transketolase family. DXPS subfamily. In terms of assembly, homodimer. Mg(2+) is required as a cofactor. Requires thiamine diphosphate as cofactor.

The enzyme catalyses D-glyceraldehyde 3-phosphate + pyruvate + H(+) = 1-deoxy-D-xylulose 5-phosphate + CO2. Its pathway is metabolic intermediate biosynthesis; 1-deoxy-D-xylulose 5-phosphate biosynthesis; 1-deoxy-D-xylulose 5-phosphate from D-glyceraldehyde 3-phosphate and pyruvate: step 1/1. Functionally, catalyzes the acyloin condensation reaction between C atoms 2 and 3 of pyruvate and glyceraldehyde 3-phosphate to yield 1-deoxy-D-xylulose-5-phosphate (DXP). The protein is 1-deoxy-D-xylulose-5-phosphate synthase of Shewanella amazonensis (strain ATCC BAA-1098 / SB2B).